A 445-amino-acid chain; its full sequence is Type II methyltransferase M.Bpa9945I (445 aa).

Positions methionine 1–histidine 444 constitute an SAM-dependent MTase C5-type domain. Residue cysteine 136 is part of the active site.

This sequence belongs to the class I-like SAM-binding methyltransferase superfamily. C5-methyltransferase family.

The protein resides in the cytoplasm. It catalyses the reaction a 2'-deoxycytidine in DNA + S-adenosyl-L-methionine = a 5-methyl-2'-deoxycytidine in DNA + S-adenosyl-L-homocysteine + H(+). Component of antiviral defense system DISARM (defense island system associated with restriction-modification), composed of DrmE, DrmA, DrmB, DrmC and DrmMII. DISARM is probably a multi-gene restriction module, this subunit is a DNA methylase. Expression of DISARM in B.subtilis (strain BEST7003) confers resistance to phages Nf, phi29, phi105, phi3T, SPO1, SPR and SPP1. Protection is over 10(7)-fold against phi3T, 10(4)-10(5)-fold against Nf, phi29, phi105 and SPR, 100-fold against SPO1 and 10-fold against SPP1. DISARM does not interfere with phage adsorption, but instead interferes with (phi3T) DNA replication early in its cycle, preventing replication, circularization and lysogeny and probably causes phage DNA degradation (DNA is degraded in SPP1-infected cells). Expression of this methylase alone leads to highly methylated phage, however they are still susceptible to the DISARM system. Its function is as follows. A methylase, recognizes the double-stranded sequence 5'-CCWGG-3', methylates C-2 on both strands. Phage Nf does not have any 5'-CCWGG-3' motifs but is still targeted by the DISARM system. The polypeptide is Type II methyltransferase M.Bpa9945I (Bacillus paralicheniformis (strain ATCC 9945a / NCIMB 11709 / CD-2)).